Here is a 423-residue protein sequence, read N- to C-terminus: uncharacterized protein (423 aa).

This sequence belongs to the mycobacterial PPE family.

In terms of biological role, could be required for host endothelial-cell invasion and/or intracellular survival. This is an uncharacterized protein from Mycobacterium tuberculosis (strain CDC 1551 / Oshkosh).